Here is a 318-residue protein sequence, read N- to C-terminus: Peroxisomal targeting signal 2 receptor (318 aa).

6 WD repeats span residues 60–91, 104–136, 148–179, 191–222, 235–266, and 279–310; these read DWNDGLFDVTWSENNEHVLVTCSGDGSLQLWD, EHTQEVYSVDWSQTRGEQLVVSGSWDQTVKVWD, GHESVIYSTIWSPHIPGCFASASGDQTLRIWD, AHQTEILSCDWCKYNENLVVTGAVDCSLRGWD, GHTYAIRRVKFSPFHASVLASCSYDFTVRFWN, and HHTEFTCGLDLSLQSPTQVADCSWDETIKIYD.

Belongs to the WD repeat peroxin-7 family. In terms of assembly, interacts with PEX5; interaction only takes place when PEX7 is associated with cargo proteins. Interacts with VWA8.

The protein resides in the cytoplasm. Its subcellular location is the cytosol. It localises to the peroxisome matrix. Receptor required for the peroxisomal import of proteins containing a C-terminal PTS2-type peroxisomal targeting signal. Specifically binds to cargo proteins containing a PTS2 peroxisomal targeting signal in the cytosol. Cargo protein-binding triggers interaction with PEX5 and formation of a ternary complex composed of PEX5 and PEX7 along with PTS2-containing cargo proteins, which is tranlocated into peroxisomes by passing through the PEX13-PEX14 docking complex. The chain is Peroxisomal targeting signal 2 receptor from Mus musculus (Mouse).